A 136-amino-acid chain; its full sequence is NADPH-dependent 7-cyano-7-deazaguanine reductase (136 aa).

Cys-50 (thioimide intermediate) is an active-site residue. Asp-57 functions as the Proton donor in the catalytic mechanism. Residues 72–74 (YEL) and 91–92 (HE) contribute to the substrate site.

This sequence belongs to the GTP cyclohydrolase I family. QueF type 1 subfamily.

The protein resides in the cytoplasm. It carries out the reaction 7-aminomethyl-7-carbaguanine + 2 NADP(+) = 7-cyano-7-deazaguanine + 2 NADPH + 3 H(+). The protein operates within tRNA modification; tRNA-queuosine biosynthesis. Its function is as follows. Catalyzes the NADPH-dependent reduction of 7-cyano-7-deazaguanine (preQ0) to 7-aminomethyl-7-deazaguanine (preQ1). This chain is NADPH-dependent 7-cyano-7-deazaguanine reductase, found in Prochlorococcus marinus (strain MIT 9515).